The following is a 154-amino-acid chain: uncharacterized protein (154 aa).

A run of 4 helical transmembrane segments spans residues 39-61, 65-87, 94-113, and 128-150; these read LLIF…FFAR, LPYI…VSLL, VESL…RVFI, and LLIN…SPFT.

It localises to the cell membrane. This is an uncharacterized protein from Aquifex aeolicus (strain VF5).